The following is a 452-amino-acid chain: MEFQAVVMAVGGGSRMTDLTSSIPKPLLPVGNKPLIWYPLNLLERVGFEEVIVVTTRDVQKALCAEFKMKMKPDIVCIPDDADMGTADSLRYIYPKLKTDVLVLSCDLITDVALHEVVDLFRAYDASLAMLMRKGQDSIEPVPGQKGKKKAVEQRDFIGVDSTGKRLLFMANEADLDEELVIKGSILQKHPRIRFHTGLVDAHLYCLKKYIVDFLMENGSITSIRSELIPYLVRKQFSSASSQQGQEEKEEDLKKKELKSLDIYSFIKEANTLNLAPYDACWNACRGDRWEDLSRSQVRCYVHIMKEGLCSRVSTLGLYMEANRQVPKLLSALCPEEPPVHSSAQIVSKHLVGVDSLIGPETQIGEKSSIKRSVIGSSCLIKDRVTITNCLLMNSVTVEEGSNIQGSVICNNAVIEKGADIKDCLIGSGQRIEAKAKRVNEVIVGNDQLMEI.

Met-1 carries the N-acetylmethionine modification. The residue at position 260 (Ser-260) is a Phosphoserine.

This sequence belongs to the eIF-2B gamma/epsilon subunits family. Component of the translation initiation factor 2B (eIF2B) complex which is a heterodecamer of two sets of five different subunits: alpha, beta, gamma, delta and epsilon. Subunits alpha, beta and delta comprise a regulatory subcomplex and subunits epsilon and gamma comprise a catalytic subcomplex. Within the complex, the hexameric regulatory complex resides at the center, with the two heterodimeric catalytic subcomplexes bound on opposite sides.

It localises to the cytoplasm. The protein localises to the cytosol. With respect to regulation, activated by the chemical integrated stress response (ISR) inhibitor ISRIB which stimulates guanine nucleotide exchange factor activity for both phosphorylated and unphosphorylated eIF2. Functionally, acts as a component of the translation initiation factor 2B (eIF2B) complex, which catalyzes the exchange of GDP for GTP on the eukaryotic initiation factor 2 (eIF2) complex gamma subunit. Its guanine nucleotide exchange factor activity is repressed when bound to eIF2 complex phosphorylated on the alpha subunit, thereby limiting the amount of methionyl-initiator methionine tRNA available to the ribosome and consequently global translation is repressed. The protein is Translation initiation factor eIF2B subunit gamma (EIF2B3) of Homo sapiens (Human).